Consider the following 380-residue polypeptide: Erythronate-4-phosphate dehydrogenase (380 aa).

The substrate site is built by Ser45 and Thr66. NAD(+)-binding positions include Gln126–Val127, Asp146, Thr174, Ala205–Arg207, and Asp231. Arg207 is a catalytic residue. Glu236 is an active-site residue. His253 functions as the Proton donor in the catalytic mechanism. Residue Gly256 coordinates NAD(+). Tyr257 serves as a coordination point for substrate.

This sequence belongs to the D-isomer specific 2-hydroxyacid dehydrogenase family. PdxB subfamily. Homodimer.

The protein resides in the cytoplasm. It catalyses the reaction 4-phospho-D-erythronate + NAD(+) = (R)-3-hydroxy-2-oxo-4-phosphooxybutanoate + NADH + H(+). The protein operates within cofactor biosynthesis; pyridoxine 5'-phosphate biosynthesis; pyridoxine 5'-phosphate from D-erythrose 4-phosphate: step 2/5. Functionally, catalyzes the oxidation of erythronate-4-phosphate to 3-hydroxy-2-oxo-4-phosphonooxybutanoate. This is Erythronate-4-phosphate dehydrogenase from Pseudomonas syringae pv. syringae (strain B728a).